A 224-amino-acid chain; its full sequence is ATP-dependent Clp protease proteolytic subunit 1 (224 aa).

The active-site Nucleophile is S120. H145 is a catalytic residue.

The protein belongs to the peptidase S14 family. Fourteen ClpP subunits assemble into 2 heptameric rings which stack back to back to give a disk-like structure with a central cavity, resembling the structure of eukaryotic proteasomes.

The protein localises to the cytoplasm. It catalyses the reaction Hydrolysis of proteins to small peptides in the presence of ATP and magnesium. alpha-casein is the usual test substrate. In the absence of ATP, only oligopeptides shorter than five residues are hydrolyzed (such as succinyl-Leu-Tyr-|-NHMec, and Leu-Tyr-Leu-|-Tyr-Trp, in which cleavage of the -Tyr-|-Leu- and -Tyr-|-Trp bonds also occurs).. In terms of biological role, cleaves peptides in various proteins in a process that requires ATP hydrolysis. Has a chymotrypsin-like activity. Plays a major role in the degradation of misfolded proteins. This chain is ATP-dependent Clp protease proteolytic subunit 1, found in Prochlorococcus marinus (strain MIT 9313).